Reading from the N-terminus, the 258-residue chain is MLLVLVVLIPVLVSSGGPDGHYEMLGTCRMVCDPYPARGPGAGARSDGGDALSEQSGAPPPSTLVQGPQGKPGRTGKPGPPGPPGDRGPPGPVGPPGEKGEPGKPGPPGLPGSGGSGAISTATYTTVPRVAFYAGLKNPHEGYEVLKFDDVVTNLGNNYDAASGKFTCNIPGTYFFTYHVLMRGGDGTSMWADLCKNGQVRASAIAQDADQNYDYASNSVILHLDAGDEVFIKLDGGKAHGGNSNKYSTFSGFIIYSD.

Positions Met1–Gly16 are cleaved as a signal peptide. A disordered region spans residues Gly39 to Ser120. The segment covering Gly67 to Lys77 has biased composition (low complexity). Residues Gly67–Gly115 form the Collagen-like domain. Positions Pro78–Pro95 are enriched in pro residues. The C1q domain occupies Thr125 to Asp258.

As to quaternary structure, interacts with ADGRB3. Forms heterooligomers with C1QL4, when proteins are coexpressed; this interaction does not occur after secretion. As to expression, expressed in brainstem. More abundant in areas of the nervous system involved in motor function, such as the Purkinje cells of the cerebellum, the accessory olivary nucleus, the pons and the red nucleus.

It is found in the secreted. Its function is as follows. May regulate the number of excitatory synapses that are formed on hippocampus neurons. Has no effect on inhibitory synapses. The polypeptide is C1q-related factor (C1ql1) (Mus musculus (Mouse)).